Consider the following 935-residue polypeptide: Inter-alpha-trypsin inhibitor heavy chain H2 (935 aa).

A signal peptide spans 1–18; that stretch reads MKGLTCFLLCFLLSEAQG. The propeptide occupies 19 to 53; it reads FEIPTNGLSEFAEYGDLAELALGKFHVVPGNRRSQ. The VIT domain maps to 45-174; that stretch reads VVPGNRRSQE…KVQFELHYQE (130 aa). Asparagine 107 is a glycosylation site (N-linked (GlcNAc...) asparagine). Glutamate 271 is subject to 4-carboxyglutamate. A VWFA domain is found at 297 to 457; that stretch reads PKNILFVIDV…YDFLKRLSND (161 aa). N-linked (GlcNAc...) asparagine glycosylation is present at asparagine 434. Serine 455 is modified (phosphoserine). Position 691 is an aspartate 1-(chondroitin 4-sulfate)-ester (aspartate 691). Residues 692 to 935 constitute a propeptide that is removed on maturation; it reads PHFIIYLPRS…PLLYSFLKRP (244 aa). Serine 875 bears the Phosphoserine mark.

Belongs to the ITIH family. As to quaternary structure, I-alpha-I plasma protease inhibitors are assembled from one or two heavy chains (HC) and one light chain, bikunin. Inter-alpha-inhibitor (I-alpha-I) is composed of ITIH1/HC1, ITIH2/HC2 and bikunin. In terms of processing, heavy chains are linked to bikunin via chondroitin 4-sulfate esterified to the alpha-carboxyl of the C-terminal aspartate after propeptide cleavage. Phosphorylated by FAM20C in the extracellular medium.

It localises to the secreted. In terms of biological role, may act as a carrier of hyaluronan in serum or as a binding protein between hyaluronan and other matrix protein, including those on cell surfaces in tissues to regulate the localization, synthesis and degradation of hyaluronan which are essential to cells undergoing biological processes. This is Inter-alpha-trypsin inhibitor heavy chain H2 (ITIH2) from Sus scrofa (Pig).